The primary structure comprises 222 residues: Orotidine 5'-phosphate decarboxylase (222 aa).

Residues D11, K30, 59 to 68, S115, 164 to 174, G187, and R188 each bind substrate; these read DFKLADIGYI and PGMGSQGGSYG. The active-site Proton donor is K61.

The protein belongs to the OMP decarboxylase family. Type 1 subfamily. As to quaternary structure, homodimer.

The enzyme catalyses orotidine 5'-phosphate + H(+) = UMP + CO2. It functions in the pathway pyrimidine metabolism; UMP biosynthesis via de novo pathway; UMP from orotate: step 2/2. Its function is as follows. Catalyzes the decarboxylation of orotidine 5'-monophosphate (OMP) to uridine 5'-monophosphate (UMP). The polypeptide is Orotidine 5'-phosphate decarboxylase (Saccharolobus solfataricus (strain ATCC 35092 / DSM 1617 / JCM 11322 / P2) (Sulfolobus solfataricus)).